The primary structure comprises 331 residues: tRNA N6-adenosine threonylcarbamoyltransferase (331 aa).

Positions 107 and 111 each coordinate Fe cation. Substrate is bound by residues 129–133 (LVSGG), aspartate 162, glycine 175, and asparagine 269. Aspartate 297 serves as a coordination point for Fe cation.

This sequence belongs to the KAE1 / TsaD family. It depends on Fe(2+) as a cofactor.

Its subcellular location is the cytoplasm. It catalyses the reaction L-threonylcarbamoyladenylate + adenosine(37) in tRNA = N(6)-L-threonylcarbamoyladenosine(37) in tRNA + AMP + H(+). Its function is as follows. Required for the formation of a threonylcarbamoyl group on adenosine at position 37 (t(6)A37) in tRNAs that read codons beginning with adenine. Is involved in the transfer of the threonylcarbamoyl moiety of threonylcarbamoyl-AMP (TC-AMP) to the N6 group of A37, together with TsaE and TsaB. TsaD likely plays a direct catalytic role in this reaction. The sequence is that of tRNA N6-adenosine threonylcarbamoyltransferase from Wolinella succinogenes (strain ATCC 29543 / DSM 1740 / CCUG 13145 / JCM 31913 / LMG 7466 / NCTC 11488 / FDC 602W) (Vibrio succinogenes).